Here is a 100-residue protein sequence, read N- to C-terminus: U-myrmeciitoxin(01)-Mg7b (100 aa).

An N-terminal signal peptide occupies residues 1–17; that stretch reads MKLSCLSLALAIILVLA. Positions 18–50 are excised as a propeptide; that stretch reads IVYSPHMEVKALADAEPDAIGFADAFGEADAEP. Ser-85 carries an O-linked (GalNAc...) serine glycan. O-linked (GalNAc...) threonine glycosylation is found at Thr-94 and Thr-95.

It belongs to the formicidae venom precursor-01 superfamily. Post-translationally, glycosylation is critical to maintaining the aqueous solubility of this protein, but does not directly contribute to its activity. In terms of tissue distribution, expressed by the venom gland.

It localises to the secreted. It is found in the target cell membrane. In terms of biological role, neurotoxin that triggers pain behavior and inflammation in mammals, and is paralytic and lethal to insects. Causes a time-dependent increase in cell leak current. May act by targeting membranes. This Myrmecia gulosa (Red bulldog ant) protein is U-myrmeciitoxin(01)-Mg7b.